The sequence spans 232 residues: Ubiquinone biosynthesis O-methyltransferase (232 aa).

The S-adenosyl-L-methionine site is built by Arg36, Gly55, Asp76, and Leu120.

This sequence belongs to the methyltransferase superfamily. UbiG/COQ3 family.

The enzyme catalyses a 3-demethylubiquinol + S-adenosyl-L-methionine = a ubiquinol + S-adenosyl-L-homocysteine + H(+). It carries out the reaction a 3-(all-trans-polyprenyl)benzene-1,2-diol + S-adenosyl-L-methionine = a 2-methoxy-6-(all-trans-polyprenyl)phenol + S-adenosyl-L-homocysteine + H(+). It participates in cofactor biosynthesis; ubiquinone biosynthesis. O-methyltransferase that catalyzes the 2 O-methylation steps in the ubiquinone biosynthetic pathway. The chain is Ubiquinone biosynthesis O-methyltransferase from Pseudomonas putida (strain ATCC 700007 / DSM 6899 / JCM 31910 / BCRC 17059 / LMG 24140 / F1).